Reading from the N-terminus, the 323-residue chain is MTRSALVTGITGQDGAYLAKLLLEKGYRVHGLVARRSSDTRWRLRELGIEGDIQYEDGDMADACSVQRAVIKAQPQEVYNLAAQSFVGASWNQPVTTGVVDGLGVTHLLEAIRQFSPETRFYQASTSEMFGLIQAERQDENTPFYPRSPYGVAKLYGHWITVNYRESFGLHASSGILFNHESPLRGIEFVTRKVTDAVARIKLGKQQELRLGNVDAKRDWGFAGDYVEAMWLMLQQDKADDYVVATGVTTTVRDMCQIAFEHVGLDYRDFLKIDPAFFRPAEVDVLLGNPAKAQRVLGWKPRTSLDELIRMMVEADLRRVSRE.

Residues 11-14, Arg-36, 59-60, and 81-85 contribute to the NADP(+) site; these read TGQD, DM, and LAAQS. Residue Thr-126 is part of the active site. Active-site nucleophile residues include Glu-128 and Tyr-150. Residues Lys-154, His-180, and Arg-185 each contribute to the NADP(+) site.

This sequence belongs to the NAD(P)-dependent epimerase/dehydratase family. GDP-mannose 4,6-dehydratase subfamily. In terms of assembly, homotetramer. NADP(+) is required as a cofactor.

It carries out the reaction GDP-alpha-D-mannose = GDP-4-dehydro-alpha-D-rhamnose + H2O. The protein operates within bacterial outer membrane biogenesis; lipopolysaccharide biosynthesis. In terms of biological role, catalyzes the conversion of GDP-D-mannose to GDP-4-dehydro-6-deoxy-D-mannose. This Pseudomonas aeruginosa (strain ATCC 15692 / DSM 22644 / CIP 104116 / JCM 14847 / LMG 12228 / 1C / PRS 101 / PAO1) protein is GDP-mannose 4,6-dehydratase.